A 93-amino-acid chain; its full sequence is Phosphoribosyl-ATP pyrophosphatase (93 aa).

It belongs to the PRA-PH family.

It is found in the cytoplasm. It catalyses the reaction 1-(5-phospho-beta-D-ribosyl)-ATP + H2O = 1-(5-phospho-beta-D-ribosyl)-5'-AMP + diphosphate + H(+). It functions in the pathway amino-acid biosynthesis; L-histidine biosynthesis; L-histidine from 5-phospho-alpha-D-ribose 1-diphosphate: step 2/9. This Mycolicibacterium smegmatis (strain ATCC 700084 / mc(2)155) (Mycobacterium smegmatis) protein is Phosphoribosyl-ATP pyrophosphatase.